The sequence spans 854 residues: ATP-dependent zinc metalloprotease FtsH (854 aa).

Residues 1-5 are Cytoplasmic-facing; that stretch reads MNRKT. A helical membrane pass occupies residues 6–26; the sequence is VFRNVLLVAVVLLVIYAFSYF. Topologically, residues 27–112 are extracellular; the sequence is SNDTRDFKTV…FNTTVTQESW (86 aa). Residues 113–133 form a helical membrane-spanning segment; it reads LTSILLFVLPMIILFGIFFFV. Over 134–854 the chain is Cytoplasmic; it reads MNRMQGGGGR…ARWDGPDGSR (721 aa). 207–214 contacts ATP; sequence GPPGTGKT. Position 429 (His-429) interacts with Zn(2+). The active site involves Glu-430. Zn(2+)-binding residues include His-433 and Asp-505. The interval 658 to 854 is disordered; sequence AGAPNSGVPN…ARWDGPDGSR (197 aa). Composition is skewed to low complexity over residues 661–692 and 698–719; these read PNSGVPNGGVPNNGGLPNNGNQGPSNGYAQPS and APQQTPQPGTPDYGAPAGWSAP. Over residues 720–730 the composition is skewed to pro residues; the sequence is GWPPRENPSPT. A compositionally biased stretch (low complexity) spans 749 to 778; it reads NQSQGQYGQPQHGQPQPDQGQYGQPHPGQQ. Over residues 812 to 822 the composition is skewed to polar residues; it reads GNPSGENQWQS. Positions 825–834 are enriched in pro residues; sequence PEQPQTPPPH.

This sequence in the central section; belongs to the AAA ATPase family. It in the C-terminal section; belongs to the peptidase M41 family. In terms of assembly, homohexamer. The cofactor is Zn(2+).

The protein resides in the cell membrane. In terms of biological role, acts as a processive, ATP-dependent zinc metallopeptidase for both cytoplasmic and membrane proteins. Plays a role in the quality control of integral membrane proteins. The protein is ATP-dependent zinc metalloprotease FtsH of Rhodococcus erythropolis (strain PR4 / NBRC 100887).